The chain runs to 278 residues: C-type lectin domain family 1 member A (278 aa).

The disordered stretch occupies residues 1–42; sequence MLAKYSSTRDMLDADGDTTMSLHSQASATSQRPELGHTEHQR. The Cytoplasmic portion of the chain corresponds to 1–52; it reads MLAKYSSTRDMLDADGDTTMSLHSQASATSQRPELGHTEHQRPSSAWRPVAL. A compositionally biased stretch (polar residues) spans 18-32; it reads TTMSLHSQASATSQR. A helical; Signal-anchor for type II membrane protein membrane pass occupies residues 53-73; the sequence is ILLTLCLVLLIGLAALGLVFF. Residues 74–278 are Extracellular-facing; that stretch reads QFYQLSNTQQ…LHEPLSRRWR (205 aa). N-linked (GlcNAc...) asparagine glycans are attached at residues N95 and N169. Residues 144 to 258 enclose the C-type lectin domain; that stretch reads HGDKCYQFYK…CRELRRCACE (115 aa). Disulfide bonds link C165-C257 and C236-C249.

It localises to the membrane. This is C-type lectin domain family 1 member A (CLEC1A) from Bos taurus (Bovine).